A 336-amino-acid polypeptide reads, in one-letter code: DNA repair protein RAD51 homolog B (336 aa).

Positions Thr45–Glu74 constitute a HhH domain. Gly124–Thr131 provides a ligand contact to ATP. The Nuclear export signal motif lies at Leu242–Gly257.

Belongs to the RecA family. RAD51 subfamily. As to quaternary structure, forms linear homooligomers, giving rise to a RAD51 nucleoprotein filament, which is essential for strand-pairing reactions during DNA recombination.

The protein localises to the nucleus. It localises to the cytoplasm. The protein resides in the chromosome. Its function is as follows. Plays an important role in homologous strand exchange, a key step in DNA repair through homologous recombination (HR). Binds to single-stranded DNA in an ATP-dependent manner to form nucleoprotein filaments which are essential for the homology search and strand exchange. Catalyzes the recognition of homology and strand exchange between homologous DNA partners to form a joint molecule between a processed DNA break and the repair template. Recruited to resolve stalled replication forks during replication stress. Also involved in interstrand cross-link repair. The sequence is that of DNA repair protein RAD51 homolog B (rad51-b) from Xenopus laevis (African clawed frog).